Reading from the N-terminus, the 561-residue chain is Zinc finger protein with KRAB and SCAN domains 1 (561 aa).

Residues 1 to 51 (MMTAESRETTGLSPQAAQEKDGIVIVKVEEEDEEDHMWGQDSSLQETPPPD) form a disordered region. A Phosphoserine modification is found at S13. Residue K27 forms a Glycyl lysine isopeptide (Lys-Gly) (interchain with G-Cter in SUMO2) linkage. Positions 56–138 (RQRFRRFCYQ…TLLEDLELDL (83 aa)) constitute an SCAN box domain. Residues 163–187 (VQESSSFDHHETAQSHFKHSSRKPR) are disordered. Residues 178 to 187 (HFKHSSRKPR) are compositionally biased toward basic residues. Residues K180 and K226 each participate in a glycyl lysine isopeptide (Lys-Gly) (interchain with G-Cter in SUMO2) cross-link. Residues 225 to 304 (VKIEDMAVSL…QKEFGEKREQ (80 aa)) form the KRAB domain. Positions 260–275 (NVFSQGSENRNGNEST) are enriched in polar residues. The disordered stretch occupies residues 260–372 (NVFSQGSENR…NTPEEAPSGA (113 aa)). Basic and acidic residues-rich tracts occupy residues 276-286 (SKAEVKEDSTS) and 294-349 (FQKE…EKGK). Residues K277, K296, K301, and K336 each participate in a glycyl lysine isopeptide (Lys-Gly) (interchain with G-Cter in SUMO2) cross-link. A compositionally biased stretch (polar residues) spans 355-365 (FSLSANFNNTP). K373 is covalently cross-linked (Glycyl lysine isopeptide (Lys-Gly) (interchain with G-Cter in SUMO2)). 6 C2H2-type zinc fingers span residues 375 to 397 (HRCDECGKCFTRSSSLIRHKIIH), 403 to 425 (YECNECGKAFSLNSNLVLHQRIH), 431 to 453 (HECNECGKAFSHSSNLILHQRIH), 459 to 481 (YECNECGKAFSQSSDLTKHQRIH), 487 to 509 (YECSECGKAFNRNSYLILHRRIH), and 515 to 537 (YKCTKCGKAFTRSSTLTLHHRIH). Glycyl lysine isopeptide (Lys-Gly) (interchain with G-Cter in SUMO2) cross-links involve residues K410, K438, and K476. Residue K558 forms a Glycyl lysine isopeptide (Lys-Gly) (interchain with G-Cter in SUMO2) linkage.

The protein belongs to the krueppel C2H2-type zinc-finger protein family.

It localises to the nucleus. In terms of biological role, may be involved in transcriptional regulation. This is Zinc finger protein with KRAB and SCAN domains 1 (Zkscan1) from Mus musculus (Mouse).